We begin with the raw amino-acid sequence, 545 residues long: Germacrene D synthase 1 (545 aa).

Mg(2+) is bound by residues D298, D302, N443, and E451. The short motif at 298–302 is the DDXXD motif element; sequence DDTFD.

This sequence belongs to the terpene synthase family. Requires Mg(2+) as cofactor.

It is found in the cytoplasm. It localises to the cytosol. It catalyses the reaction (2E,6E)-farnesyl diphosphate = (-)-germacrene D + diphosphate. It participates in secondary metabolite biosynthesis; terpenoid biosynthesis. Its function is as follows. Sesquiterpene synthase involved in germacrene D biosynthesis. Also produces at least 13 additional sesquiterpene products, including germacrene C and (+)-germacrene A, beta-ylangene, (E)-beta-farnesene and (E,E)-alpha-farnesene. This chain is Germacrene D synthase 1, found in Pogostemon cablin (Patchouli).